The chain runs to 704 residues: Metabotropic glutamate receptor-like protein K (704 aa).

The N-terminal stretch at 1–21 (MIKLILSIILIICFIINSIES) is a signal peptide. The Extracellular portion of the chain corresponds to 22-383 (FKMITLTTGP…SKVEFQRSIQ (362 aa)). Asparagine 66, asparagine 104, asparagine 256, asparagine 286, asparagine 308, asparagine 337, asparagine 343, and asparagine 368 each carry an N-linked (GlcNAc...) asparagine glycan. A helical transmembrane segment spans residues 384–404 (IGFSIVSGLLIGFVILMMIGI). Residues 405 to 419 (VKYQDTPSIRSASPS) lie on the Cytoplasmic side of the membrane. Residues 420–440 (FLNLTLLGGVIIFIGIIVWVA) form a helical membrane-spanning segment. The Extracellular portion of the chain corresponds to 441–455 (PISTHQCNARFWLVT). A helical transmembrane segment spans residues 456–476 (IGFSTLIGSLVVKNIRIWLIF). Residues 477-492 (DNPELKIRTITNNQLY) lie on the Cytoplasmic side of the membrane. Residues 493 to 513 (PWVGLCLVINIVLMSIITTVG) form a helical membrane-spanning segment. At 514-541 (DLKAIEAQGIDSLGKFEYMTICKMNYTG) the chain is on the extracellular side. An N-linked (GlcNAc...) asparagine glycan is attached at asparagine 538. The helical transmembrane segment at 542 to 562 (AATLYSILAYFGTLLLVGVFV) threads the bilayer. Over 563–578 (SWKIRIVHIEEFSECT) the chain is Cytoplasmic. A helical membrane pass occupies residues 579–599 (AIAKTLYSISFCLFVIVPLMI). Residues 600 to 608 (SPQDKQSET) are Extracellular-facing. Residues 609–629 (IILCVTGIFITTGALLIFFLP) form a helical membrane-spanning segment. Over 630–704 (KFWRIFGNEK…NESSLSNETK (75 aa)) the chain is Cytoplasmic. 2 disordered regions span residues 657–677 (ARAESANRNNSSNSFGFSKSS) and 685–704 (SGIESLNDDSNESSLSNETK).

It in the N-terminal section; belongs to the BMP lipoprotein family. This sequence in the C-terminal section; belongs to the G-protein coupled receptor 3 family. GABA-B receptor subfamily.

The protein resides in the membrane. In Dictyostelium discoideum (Social amoeba), this protein is Metabotropic glutamate receptor-like protein K (grlK).